The chain runs to 119 residues: Large ribosomal subunit protein uL22 (119 aa).

This sequence belongs to the universal ribosomal protein uL22 family. Part of the 50S ribosomal subunit.

Functionally, this protein binds specifically to 23S rRNA; its binding is stimulated by other ribosomal proteins, e.g. L4, L17, and L20. It is important during the early stages of 50S assembly. It makes multiple contacts with different domains of the 23S rRNA in the assembled 50S subunit and ribosome. In terms of biological role, the globular domain of the protein is located near the polypeptide exit tunnel on the outside of the subunit, while an extended beta-hairpin is found that lines the wall of the exit tunnel in the center of the 70S ribosome. This Trichodesmium erythraeum (strain IMS101) protein is Large ribosomal subunit protein uL22.